The following is a 437-amino-acid chain: Trigger factor (437 aa).

The PPIase FKBP-type domain maps to 163 to 248 (GHMVTIDYAF…LNEIKRKELP (86 aa)).

It belongs to the FKBP-type PPIase family. Tig subfamily.

The protein localises to the cytoplasm. It catalyses the reaction [protein]-peptidylproline (omega=180) = [protein]-peptidylproline (omega=0). Its function is as follows. Involved in protein export. Acts as a chaperone by maintaining the newly synthesized protein in an open conformation. Functions as a peptidyl-prolyl cis-trans isomerase. The protein is Trigger factor of Pelobacter propionicus (strain DSM 2379 / NBRC 103807 / OttBd1).